The sequence spans 385 residues: 8-amino-7-oxononanoate synthase (385 aa).

Arginine 21 lines the substrate pocket. 108–109 (GF) lines the pyridoxal 5'-phosphate pocket. Histidine 133 contacts substrate. 3 residues coordinate pyridoxal 5'-phosphate: serine 179, histidine 207, and threonine 233. At lysine 236 the chain carries N6-(pyridoxal phosphate)lysine. Threonine 352 serves as a coordination point for substrate.

Belongs to the class-II pyridoxal-phosphate-dependent aminotransferase family. BioF subfamily. Homodimer. Pyridoxal 5'-phosphate is required as a cofactor.

The enzyme catalyses 6-carboxyhexanoyl-[ACP] + L-alanine + H(+) = (8S)-8-amino-7-oxononanoate + holo-[ACP] + CO2. It functions in the pathway cofactor biosynthesis; biotin biosynthesis. Catalyzes the decarboxylative condensation of pimeloyl-[acyl-carrier protein] and L-alanine to produce 8-amino-7-oxononanoate (AON), [acyl-carrier protein], and carbon dioxide. The chain is 8-amino-7-oxononanoate synthase from Salmonella paratyphi C (strain RKS4594).